The sequence spans 223 residues: MKRTKSIHHASFRKSWSARHLTPVALAVTAVFMLAGCEKSDETVSLYQNADDCSAANPGKSAECTTAYNNALKEAERTAPKYATREDCVAEFGEGQCQQAPAQAGMAPENQAQAQQSSGSFWMPLMAGYMMGRLMGGGAGFAQQPLFSSKNPASPAYGKYTDAAGKNYGAAQPGRTMTVPKTAMAPKPATTTTVTRGGFGESVAKQSAMQRSAAGTSTRSMGG.

Positions 201-223 are disordered; that stretch reads ESVAKQSAMQRSAAGTSTRSMGG. Positions 204-223 are enriched in polar residues; that stretch reads AKQSAMQRSAAGTSTRSMGG.

The protein belongs to the UPF0441 family.

This chain is UPF0441 protein YgiB, found in Salmonella arizonae (strain ATCC BAA-731 / CDC346-86 / RSK2980).